The primary structure comprises 1194 residues: Pre-mRNA-processing ATP-dependent RNA helicase prp-5 (1194 aa).

Disordered stretches follow at residues 1–201 (MARL…KEAK), 224–248 (AVVGSGTNSPAPASPAAAESPASPA), and 452–484 (ASGEESHSKADTLTEKKNGNIPPEAYFSDDDYG). Basic and acidic residues-rich tracts occupy residues 21–37 (RKDDDRRDRDRRDGPVD) and 44–154 (SPID…RDQP). The segment covering 156 to 176 (PGNTTAKENEPAKSTPTQPQT) has biased composition (polar residues). The segment covering 177 to 186 (EAEKKAERLR) has biased composition (basic and acidic residues). Residues 232 to 248 (SPAPASPAAAESPASPA) show a composition bias toward low complexity. A compositionally biased stretch (basic and acidic residues) spans 455 to 469 (EESHSKADTLTEKKN). Residues 561–589 (QKWSQCGLTRPILDTIESLGFEKPTPIQM) carry the Q motif motif. Residues 592-770 (LPVIMSGRDV…KKVLRDPVEI (179 aa)) enclose the Helicase ATP-binding domain. 605–612 (AKTGSGKT) contacts ATP. Positions 718–721 (DEAD) match the DEAD box motif. Residues 797-945 (RLLELLGELY…PVPDRLNEMR (149 aa)) enclose the Helicase C-terminal domain. 2 disordered regions span residues 952-1011 (VKAG…DKTK) and 1025-1056 (DASKAETEDKHAIPAGAVKAGHHASSGKSGGA). Basic and acidic residues-rich tracts occupy residues 967–980 (GLEKLDKDREAARM), 997–1011 (EDAPAEDGEKKDKTK), and 1025–1036 (DASKAETEDKHA).

It belongs to the DEAD box helicase family. DDX46/PRP5 subfamily.

It is found in the nucleus. It carries out the reaction ATP + H2O = ADP + phosphate + H(+). Functionally, ATP-dependent RNA helicase involved spliceosome assembly and in nuclear splicing. Catalyzes an ATP-dependent conformational change of U2 snRNP. Bridges U1 and U2 snRNPs and enables stable U2 snRNP association with intron RNA. The sequence is that of Pre-mRNA-processing ATP-dependent RNA helicase prp-5 (prp-5) from Neurospora crassa (strain ATCC 24698 / 74-OR23-1A / CBS 708.71 / DSM 1257 / FGSC 987).